A 104-amino-acid polypeptide reads, in one-letter code: Naphthalene 1,2-dioxygenase system, ferredoxin component (104 aa).

Residues Ile-6–Ile-101 form the Rieske domain. The [2Fe-2S] cluster site is built by Cys-45, His-47, Cys-64, and His-67.

It belongs to the bacterial ring-hydroxylating dioxygenase ferredoxin component family. As to quaternary structure, the naphthalene dioxygenase (NDO) multicomponent enzyme system is composed of an electron transfer component and a dioxygenase component (iron sulfur protein (ISP)). The electron transfer component is composed of a ferredoxin reductase (NdoR) and a ferredoxin (NdoA), and the dioxygenase component is formed of a heterohexamer (trimer of heterodimers) of three large alpha subunits (NdoB) and three small beta subunits (NdoC). Requires [2Fe-2S] cluster as cofactor.

Its pathway is aromatic compound metabolism; naphthalene degradation. In terms of biological role, component of the naphthalene dioxygenase (NDO) multicomponent enzyme system which catalyzes the incorporation of both atoms of molecular oxygen into naphthalene to form cis-(1R,2S)-dihydroxy-1,2-dihydronaphthalene. Functions as an intermediate electron transfer protein via a specific interaction with iron sulfur protein components (ISP) (NdoB and NdoC). Also able to catalyze the cis-dihydroxylation of biphenyl and phenanthrene. The chain is Naphthalene 1,2-dioxygenase system, ferredoxin component from Pseudomonas putida (Arthrobacter siderocapsulatus).